Reading from the N-terminus, the 144-residue chain is Large ribosomal subunit protein uL15 (144 aa).

A disordered region spans residues 1–54; sequence MHLNTLKPAEGAKKLAKRKGRGQGSGNGKMAGRGHKGQKSRSGGMPKIGFEGGQ. A compositionally biased stretch (gly residues) spans 22 to 31; the sequence is GQGSGNGKMA.

Belongs to the universal ribosomal protein uL15 family. Part of the 50S ribosomal subunit.

Its function is as follows. Binds to the 23S rRNA. This chain is Large ribosomal subunit protein uL15, found in Hydrogenovibrio crunogenus (strain DSM 25203 / XCL-2) (Thiomicrospira crunogena).